A 202-amino-acid polypeptide reads, in one-letter code: Imidazoleglycerol-phosphate dehydratase (202 aa).

This sequence belongs to the imidazoleglycerol-phosphate dehydratase family.

Its subcellular location is the cytoplasm. It carries out the reaction D-erythro-1-(imidazol-4-yl)glycerol 3-phosphate = 3-(imidazol-4-yl)-2-oxopropyl phosphate + H2O. Its pathway is amino-acid biosynthesis; L-histidine biosynthesis; L-histidine from 5-phospho-alpha-D-ribose 1-diphosphate: step 6/9. This chain is Imidazoleglycerol-phosphate dehydratase, found in Nocardioides sp. (strain ATCC BAA-499 / JS614).